A 215-amino-acid polypeptide reads, in one-letter code: Phosphoserine phosphatase (215 aa).

The active-site Nucleophile is the aspartate 11. Mg(2+)-binding residues include aspartate 11 and aspartate 13. Aspartate 13 functions as the Proton donor in the catalytic mechanism. Residues glutamate 20, arginine 56, 99-100 (SG), and lysine 144 each bind substrate. Aspartate 167 lines the Mg(2+) pocket. Asparagine 170 contributes to the substrate binding site.

The protein belongs to the HAD-like hydrolase superfamily. SerB family. The cofactor is Mg(2+).

The enzyme catalyses O-phospho-L-serine + H2O = L-serine + phosphate. The catalysed reaction is O-phospho-D-serine + H2O = D-serine + phosphate. It participates in amino-acid biosynthesis; L-serine biosynthesis; L-serine from 3-phospho-D-glycerate: step 3/3. This is Phosphoserine phosphatase from Streptococcus thermophilus (strain ATCC BAA-250 / LMG 18311).